A 176-amino-acid polypeptide reads, in one-letter code: Translation initiation factor IF-3 (176 aa).

The protein belongs to the IF-3 family. In terms of assembly, monomer.

The protein localises to the cytoplasm. In terms of biological role, IF-3 binds to the 30S ribosomal subunit and shifts the equilibrium between 70S ribosomes and their 50S and 30S subunits in favor of the free subunits, thus enhancing the availability of 30S subunits on which protein synthesis initiation begins. This Streptococcus pyogenes serotype M18 (strain MGAS8232) protein is Translation initiation factor IF-3.